We begin with the raw amino-acid sequence, 369 residues long: Uroporphyrinogen decarboxylase (369 aa).

The tract at residues 1–26 is disordered; sequence MPVLHVDARPGSGPGGVSPPPSGAAL. Residues 56-60, Asp-105, Tyr-180, Ser-235, and His-348 contribute to the substrate site; that span reads RQAGR.

Belongs to the uroporphyrinogen decarboxylase family. Homodimer.

The protein resides in the cytoplasm. The catalysed reaction is uroporphyrinogen III + 4 H(+) = coproporphyrinogen III + 4 CO2. Its pathway is porphyrin-containing compound metabolism; protoporphyrin-IX biosynthesis; coproporphyrinogen-III from 5-aminolevulinate: step 4/4. Its function is as follows. Catalyzes the decarboxylation of four acetate groups of uroporphyrinogen-III to yield coproporphyrinogen-III. This chain is Uroporphyrinogen decarboxylase, found in Frankia casuarinae (strain DSM 45818 / CECT 9043 / HFP020203 / CcI3).